The sequence spans 188 residues: Elongation factor P (188 aa).

This sequence belongs to the elongation factor P family.

It is found in the cytoplasm. The protein operates within protein biosynthesis; polypeptide chain elongation. Functionally, involved in peptide bond synthesis. Stimulates efficient translation and peptide-bond synthesis on native or reconstituted 70S ribosomes in vitro. Probably functions indirectly by altering the affinity of the ribosome for aminoacyl-tRNA, thus increasing their reactivity as acceptors for peptidyl transferase. In Streptomyces coelicolor (strain ATCC BAA-471 / A3(2) / M145), this protein is Elongation factor P.